The chain runs to 355 residues: UDP-N-acetylglucosamine--N-acetylmuramyl-(pentapeptide) pyrophosphoryl-undecaprenol N-acetylglucosamine transferase (355 aa).

UDP-N-acetyl-alpha-D-glucosamine is bound by residues 12–14 (TGG), Asn124, Arg163, Ser191, Ile243, 262–267 (ALTVAE), and Gln288.

The protein belongs to the glycosyltransferase 28 family. MurG subfamily.

The protein localises to the cell inner membrane. The enzyme catalyses di-trans,octa-cis-undecaprenyl diphospho-N-acetyl-alpha-D-muramoyl-L-alanyl-D-glutamyl-meso-2,6-diaminopimeloyl-D-alanyl-D-alanine + UDP-N-acetyl-alpha-D-glucosamine = di-trans,octa-cis-undecaprenyl diphospho-[N-acetyl-alpha-D-glucosaminyl-(1-&gt;4)]-N-acetyl-alpha-D-muramoyl-L-alanyl-D-glutamyl-meso-2,6-diaminopimeloyl-D-alanyl-D-alanine + UDP + H(+). The protein operates within cell wall biogenesis; peptidoglycan biosynthesis. Functionally, cell wall formation. Catalyzes the transfer of a GlcNAc subunit on undecaprenyl-pyrophosphoryl-MurNAc-pentapeptide (lipid intermediate I) to form undecaprenyl-pyrophosphoryl-MurNAc-(pentapeptide)GlcNAc (lipid intermediate II). The sequence is that of UDP-N-acetylglucosamine--N-acetylmuramyl-(pentapeptide) pyrophosphoryl-undecaprenol N-acetylglucosamine transferase from Tolumonas auensis (strain DSM 9187 / NBRC 110442 / TA 4).